A 261-amino-acid chain; its full sequence is Claudin-18 (261 aa).

The Cytoplasmic portion of the chain corresponds to 1–6 (MATTTC). Residues 7–27 (QVVGLLLSLLGLAGCIAATGM) form a helical membrane-spanning segment. Topologically, residues 28–80 (DMWSTQDLYDNPVTSVFQYEGLWRSCVQQSSGFTECRPYFTILGLPAMLQAVR) are extracellular. The helical transmembrane segment at 81–101 (ALMIVGIVLGVIGILVSIFAL) threads the bilayer. The Cytoplasmic portion of the chain corresponds to 102–122 (KCIRIGSMDDSAKAKMTLTSG). A helical membrane pass occupies residues 123–143 (IMFIISGVCAIIGVSVFANML). Topologically, residues 144-173 (VTNFWMSTANMYSGMGGMVQTVQTRYTFGA) are extracellular. The chain crosses the membrane as a helical span at residues 174 to 194 (ALFVGWIAGGLTLIGGVMMCI). Topologically, residues 195–261 (ACRGLTPDDR…QSHPTKYDYV (67 aa)) are cytoplasmic. The required for role in regulation of RANKL-induced osteoclast differentiation stretch occupies residues 195-261 (ACRGLTPDDR…QSHPTKYDYV (67 aa)). S214 is modified (phosphoserine). The interval 242–261 (DGGARTEDDEQSHPTKYDYV) is disordered.

This sequence belongs to the claudin family. Interacts with TJP2/ZO-2. Interacts with TJP1/ZO-1. Interacts with YAP1 (phosphorylated); the interaction sequesters YAP1 away from the nucleus and thereby restricts transcription of YAP1 target genes. Interacts with CLDN19. Expressed in the lung (at protein level).

The protein resides in the cell junction. The protein localises to the tight junction. Its subcellular location is the cell membrane. Its function is as follows. Involved in alveolar fluid homeostasis via regulation of alveolar epithelial tight junction composition and therefore ion transport and solute permeability, potentially via downstream regulation of the actin cytoskeleton organization and beta-2-adrenergic signaling. Required for lung alveolarization and maintenance of the paracellular alveolar epithelial barrier. Acts to maintain epithelial progenitor cell proliferation and organ size, via regulation of YAP1 localization away from the nucleus and thereby restriction of YAP1 target gene transcription. Acts as a negative regulator of RANKL-induced osteoclast differentiation, potentially via relocation of TJP2/ZO-2 away from the nucleus, subsequently involved in bone resorption in response to calcium deficiency. Mediates the osteoprotective effects of estrogen, potentially via acting downstream of estrogen signaling independently of RANKL signaling pathways. Functionally, required for the formation of the gastric paracellular barrier via its role in tight junction formation, thereby involved in the response to gastric acidification. The protein is Claudin-18 of Rattus norvegicus (Rat).